Here is a 120-residue protein sequence, read N- to C-terminus: Large ribosomal subunit protein uL22 (120 aa).

Residues 1 to 25 (MFVNKKYTAKGKNLPSSPKKVRPIA) form a disordered region.

It belongs to the universal ribosomal protein uL22 family. In terms of assembly, part of the 50S ribosomal subunit.

Its function is as follows. This protein binds specifically to 23S rRNA; its binding is stimulated by other ribosomal proteins, e.g. L4, L17, and L20. It is important during the early stages of 50S assembly. It makes multiple contacts with different domains of the 23S rRNA in the assembled 50S subunit and ribosome. Functionally, the globular domain of the protein is located near the polypeptide exit tunnel on the outside of the subunit, while an extended beta-hairpin is found that lines the wall of the exit tunnel in the center of the 70S ribosome. The polypeptide is Large ribosomal subunit protein uL22 (Borrelia recurrentis (strain A1)).